A 324-amino-acid polypeptide reads, in one-letter code: Protease HtpX homolog (324 aa).

2 helical membrane passes run 7 to 24 and 29 to 46; these read ALLL…GYLI and GALI…FTYW. Position 130 (H130) interacts with Zn(2+). E131 is an active-site residue. H134 provides a ligand contact to Zn(2+). 2 helical membrane-spanning segments follow: residues 145 to 165 and 172 to 192; these read ITAT…FFGG and GPGL…AMLV. Position 201 (E201) interacts with Zn(2+). Polar residues predominate over residues 288-305; that stretch reads PASTFSRGAGTAASSGTP. The tract at residues 288-324 is disordered; the sequence is PASTFSRGAGTAASSGTPRGTGRSPWGGQPRGRGPWG.

This sequence belongs to the peptidase M48B family. Zn(2+) serves as cofactor.

Its subcellular location is the cell inner membrane. In Rhodopseudomonas palustris (strain TIE-1), this protein is Protease HtpX homolog.